The chain runs to 435 residues: NADH-quinone oxidoreductase subunit D (435 aa).

Belongs to the complex I 49 kDa subunit family. In terms of assembly, NDH-1 is composed of 14 different subunits. Subunits NuoB, C, D, E, F, and G constitute the peripheral sector of the complex.

It localises to the cell inner membrane. The enzyme catalyses a quinone + NADH + 5 H(+)(in) = a quinol + NAD(+) + 4 H(+)(out). NDH-1 shuttles electrons from NADH, via FMN and iron-sulfur (Fe-S) centers, to quinones in the respiratory chain. The immediate electron acceptor for the enzyme in this species is believed to be ubiquinone. Couples the redox reaction to proton translocation (for every two electrons transferred, four hydrogen ions are translocated across the cytoplasmic membrane), and thus conserves the redox energy in a proton gradient. The sequence is that of NADH-quinone oxidoreductase subunit D from Xylella fastidiosa (strain M12).